We begin with the raw amino-acid sequence, 751 residues long: Serine/threonine-protein kinase-like protein CCR4 (751 aa).

Positions 1–31 (MALTISISCFSSYFVSLLLLVLSSFSFVCFS) are cleaved as a signal peptide. Residues 32 to 366 (LSTVSISHIS…NKTWSRRNIA (335 aa)) are Extracellular-facing. 7 N-linked (GlcNAc...) asparagine glycosylation sites follow: asparagine 42, asparagine 51, asparagine 98, asparagine 243, asparagine 254, asparagine 283, and asparagine 357. Residues 367-387 (FLVVGCVGTFSLLLVISFLIF) traverse the membrane as a helical segment. The Cytoplasmic segment spans residues 388–751 (KSHCRCRVHD…TETVSRSNTY (364 aa)). In terms of domain architecture, Protein kinase spans 443–733 (FSVRFHLGIG…EVVSKLESAL (291 aa)). ATP contacts are provided by residues 449 to 457 (LGIGSFGSV) and lysine 471. Catalysis depends on aspartate 579, which acts as the Proton acceptor.

The protein belongs to the protein kinase superfamily. Ser/Thr protein kinase family. Homodimer. In terms of tissue distribution, expressed in roots, leaves, especially in trichomes, shoot apical meristems (SAM), and, to a lower extent, in floral buds.

Its subcellular location is the membrane. It carries out the reaction L-seryl-[protein] + ATP = O-phospho-L-seryl-[protein] + ADP + H(+). It catalyses the reaction L-threonyl-[protein] + ATP = O-phospho-L-threonyl-[protein] + ADP + H(+). This is Serine/threonine-protein kinase-like protein CCR4 (CCR4) from Arabidopsis thaliana (Mouse-ear cress).